Reading from the N-terminus, the 1003-residue chain is Glycine--tRNA ligase (1003 aa).

Residues 1 to 310 (MSSQPLTLQD…VTAKQIPHIC (310 aa)) form a glycine--tRNA ligase alpha subunit region. Positions 311 to 1003 (QDEDFLLEIG…CFGFYAWDAL (693 aa)) are glycine--tRNA ligase beta subunit.

This sequence belongs to the class-II aminoacyl-tRNA synthetase family.

Its subcellular location is the cytoplasm. It catalyses the reaction tRNA(Gly) + glycine + ATP = glycyl-tRNA(Gly) + AMP + diphosphate. This is Glycine--tRNA ligase (glyQS) from Chlamydia muridarum (strain MoPn / Nigg).